We begin with the raw amino-acid sequence, 46 residues long: Diuretic hormone (46 aa).

Isoleucine amide is present on isoleucine 46.

Belongs to the sauvagine/corticotropin-releasing factor/urotensin I family.

The protein localises to the secreted. Its function is as follows. Regulation of fluid secretion. Stimulates primary urine secretion by Malpighian tubules and causes a dose-dependent stimulation of cAMP levels in the tubules. The chain is Diuretic hormone from Periplaneta americana (American cockroach).